Here is a 399-residue protein sequence, read N- to C-terminus: Enoyl-[acyl-carrier-protein] reductase [NADH] 2 (399 aa).

Residues 48–53, 75–76, 112–113, and 141–142 each bind NAD(+); these read GASSGF, FE, DA, and LA. Residue Y227 participates in substrate binding. Y237 serves as the catalytic Proton donor. NAD(+)-binding positions include K246 and 275–277; that span reads LVT.

It belongs to the TER reductase family. Monomer.

It carries out the reaction a 2,3-saturated acyl-[ACP] + NAD(+) = a (2E)-enoyl-[ACP] + NADH + H(+). It functions in the pathway lipid metabolism; fatty acid biosynthesis. Its function is as follows. Involved in the final reduction of the elongation cycle of fatty acid synthesis (FAS II). Catalyzes the reduction of a carbon-carbon double bond in an enoyl moiety that is covalently linked to an acyl carrier protein (ACP). This is Enoyl-[acyl-carrier-protein] reductase [NADH] 2 from Vibrio parahaemolyticus serotype O3:K6 (strain RIMD 2210633).